Reading from the N-terminus, the 1958-residue chain is Callose synthase 7 (1958 aa).

A disordered region spans residues 1–29 (MASTSSGGRGEDGRPPQMQPVRSMSRKMT). Residues 1-504 (MASTSSGGRG…LYRSFDRMWM (504 aa)) lie on the Cytoplasmic side of the membrane. The chain crosses the membrane as a helical span at residues 505 to 525 (FLVLSLQTMIIVAWHPSGSIL). At 526-535 (AIFTEDVFRN) the chain is on the extracellular side. A helical membrane pass occupies residues 536 to 556 (VLTIFITSAFLNLLQATLDLV). The Cytoplasmic portion of the chain corresponds to 557 to 569 (LSFGAWKSLKFSQ). The chain crosses the membrane as a helical span at residues 570 to 590 (IMRYITKFLMAAMWAIMLPIT). Residues 591–620 (YSKSVQNPTGLIKFFSSWVGSWLHRSLYDY) lie on the Extracellular side of the membrane. The chain crosses the membrane as a helical span at residues 621–641 (AIALYVLPNILAAVFFLLPPL). Topologically, residues 642–673 (RRIMERSNMRIVTLIMWWAQPKLYIGRGMHEE) are cytoplasmic. Residues 674 to 694 (MFALFKYTFFWVMLLLSKLAF) form a helical membrane-spanning segment. The Extracellular portion of the chain corresponds to 695-730 (SYYVEILPLVNPTKLIWDMHVVNYEWHEFFPNATHN). Residues 731–751 (IGVIIAIWGPIVLVYFMDTQI) form a helical membrane-spanning segment. Residues 752-1496 (WYAIFSTLFG…FDFYRMLSFY (745 aa)) lie on the Cytoplasmic side of the membrane. The helical transmembrane segment at 1497-1517 (FTTVGFYFSSMITVLTVYVFL) threads the bilayer. Residues 1518 to 1547 (YGRLYLVLSGLEKNILQSASVHESNALEQA) lie on the Extracellular side of the membrane. The helical transmembrane segment at 1548–1568 (LAAQSVFQLGFLMVLPMVMEI) threads the bilayer. Residues 1569–1576 (GLEKGFRT) are Cytoplasmic-facing. Residues 1577–1597 (ALGDFIIMQLQLASVFFTFQL) form a helical membrane-spanning segment. The Extracellular segment spans residues 1598–1640 (GTKAHYFGRTILHGGSKYRATGRGFVVFHAKFAENYRLYSRSH). Residues 1641–1661 (FVKGLELVILLVVYQVYGTSY) traverse the membrane as a helical segment. Residues 1662-1667 (RSSSTY) lie on the Cytoplasmic side of the membrane. The helical transmembrane segment at 1668 to 1688 (MYITFSMWFLVTSWLFAPFIF) threads the bilayer. Over 1689–1742 (NPSGFEWQKTVDDWTDWKRWMGNRGGIGIVLDKSWESWWDIEQEHLKHTNLRGR) the chain is Extracellular. The chain crosses the membrane as a helical span at residues 1743–1763 (VLEILLALRFLLYQYGIVYHL). Topologically, residues 1764–1771 (NIARRHTT) are cytoplasmic. The chain crosses the membrane as a helical span at residues 1772-1792 (FLVYGLSWAILLSVLLVLKMV). Residues 1793-1812 (SMGRRKFGTDFQVMFRILKA) lie on the Extracellular side of the membrane. Residues 1813–1833 (LLFLGFLSVMTVLFVVCGLTI) traverse the membrane as a helical segment. Residues 1834–1835 (SD) are Cytoplasmic-facing. Residues 1836–1856 (LFASILAFLPTGWAILLIGQA) form a helical membrane-spanning segment. Over 1857–1878 (LRSVFKGLGFWDSVKELGRAYE) the chain is Extracellular. A helical transmembrane segment spans residues 1879 to 1899 (YIMGLVIFTPIAVLSWFPFVS). Residues 1900 to 1958 (EFQTRLLFNQAFSRGLQISMILAGKKDKETPSTKYLGHTEESFGLEHDTNTFNHYYLWT) are Cytoplasmic-facing.

The protein belongs to the glycosyltransferase 48 family.

It localises to the cell membrane. It catalyses the reaction [(1-&gt;3)-beta-D-glucosyl](n) + UDP-alpha-D-glucose = [(1-&gt;3)-beta-D-glucosyl](n+1) + UDP + H(+). In terms of biological role, involved in callose synthesis at the forming cell plate during cytokinesis. During plant growth and development, callose is found as a transitory component of the cell plate in dividing cells, is a major component of pollen mother cell walls and pollen tubes, and is found as a structural component of plasmodesmatal canals. The protein is Callose synthase 7 (CALS7) of Arabidopsis thaliana (Mouse-ear cress).